The chain runs to 144 residues: Large ribosomal subunit protein uL14 (144 aa).

This sequence belongs to the universal ribosomal protein uL14 family. As to quaternary structure, part of the 50S ribosomal subunit. Forms a cluster with proteins L3 and L24e, part of which may contact the 16S rRNA in 2 intersubunit bridges.

Its function is as follows. Binds to 23S rRNA. Forms part of two intersubunit bridges in the 70S ribosome. The polypeptide is Large ribosomal subunit protein uL14 (Caldivirga maquilingensis (strain ATCC 700844 / DSM 13496 / JCM 10307 / IC-167)).